Consider the following 149-residue polypeptide: D-aminoacyl-tRNA deacylase (149 aa).

The short motif at G137 to P138 is the Gly-cisPro motif, important for rejection of L-amino acids element.

It belongs to the DTD family. In terms of assembly, homodimer.

It is found in the cytoplasm. It carries out the reaction glycyl-tRNA(Ala) + H2O = tRNA(Ala) + glycine + H(+). It catalyses the reaction a D-aminoacyl-tRNA + H2O = a tRNA + a D-alpha-amino acid + H(+). Its function is as follows. An aminoacyl-tRNA editing enzyme that deacylates mischarged D-aminoacyl-tRNAs. Also deacylates mischarged glycyl-tRNA(Ala), protecting cells against glycine mischarging by AlaRS. Acts via tRNA-based rather than protein-based catalysis; rejects L-amino acids rather than detecting D-amino acids in the active site. By recycling D-aminoacyl-tRNA to D-amino acids and free tRNA molecules, this enzyme counteracts the toxicity associated with the formation of D-aminoacyl-tRNA entities in vivo and helps enforce protein L-homochirality. The protein is D-aminoacyl-tRNA deacylase of Clostridium botulinum (strain Loch Maree / Type A3).